Consider the following 319-residue polypeptide: Oligopeptide transport system permease protein OppB (319 aa).

Helical transmembrane passes span 9-29 (ILLMIPQLFILSILVFFFAKL), 99-119 (FWMSLLSVILTYLFAIPMSIV), 137-157 (SITFGIPPYVFYLLIIFIFGY), 183-203 (IYHMILPAFSLAVFGTVGIFT), 248-268 (FGFVITGLLGGAIFAETIFGY), and 289-309 (ALILLNGFLGLLGALLSDIIM). The region spanning 95-305 (AINTFWMSLL…FLGLLGALLS (211 aa)) is the ABC transmembrane type-1 domain.

It belongs to the binding-protein-dependent transport system permease family. OppBC subfamily. As to quaternary structure, the complex is composed of two ATP-binding proteins (OppD and OppF), two transmembrane proteins (OppB and OppC) and a solute-binding protein (OppA).

It localises to the cell membrane. In terms of biological role, part of the ABC transporter complex OppABCDF involved in the uptake of oligopeptides. Probably responsible for the translocation of the substrate across the membrane. Essential for uptake of peptides larger than three amino acids and for growth in milk. This chain is Oligopeptide transport system permease protein OppB (oppB), found in Lactococcus lactis subsp. lactis (strain IL1403) (Streptococcus lactis).